We begin with the raw amino-acid sequence, 553 residues long: Hydroxylamine reductase (553 aa).

[2Fe-2S] cluster is bound by residues Cys3, Cys6, Cys18, and Cys25. Residues His252, Glu276, Cys320, Cys408, Cys436, Cys461, Glu495, and Lys497 each contribute to the hybrid [4Fe-2O-2S] cluster site. Residue Cys408 is modified to Cysteine persulfide.

It belongs to the HCP family. Requires [2Fe-2S] cluster as cofactor. It depends on hybrid [4Fe-2O-2S] cluster as a cofactor.

It is found in the cytoplasm. It carries out the reaction A + NH4(+) + H2O = hydroxylamine + AH2 + H(+). Functionally, catalyzes the reduction of hydroxylamine to form NH(3) and H(2)O. The protein is Hydroxylamine reductase of Aliivibrio fischeri (strain ATCC 700601 / ES114) (Vibrio fischeri).